The primary structure comprises 352 residues: Vacuolar protein sorting-associated protein 37C (352 aa).

Serine 29 carries the post-translational modification Phosphoserine. The VPS37 C-terminal domain occupies 78–167; the sequence is VERCQEQKAK…RRPRALPELA (90 aa). Positions 162–352 are disordered; it reads ALPELAGDVP…HPPGPAWPRY (191 aa). 3 stretches are compositionally biased toward pro residues: residues 173-185, 202-213, and 319-336; these read KRPP…PQAT, YPLPYSPSPGLP, and PGQP…PPGT.

It belongs to the VPS37 family. Component of the ESCRT-I complex (endosomal sorting complex required for transport I) which consists of TSG101, VPS28, a VPS37 protein (VPS37A to -D) and MVB12A or MVB12B in a 1:1:1:1 stoichiometry. Interacts with TSG101, VPS28, MVB12A and MVB12B. Component of the ESCRT-I complex (endosomal sorting complex required for transport I) which consists of TSG101, VPS28, a VPS37 protein (VPS37A to -D) and UBAP1 in a 1:1:1:1 stoichiometry. Interacts with HGS and STAM2. Interacts with CEP55. Phosphorylated by TBK1.

The protein resides in the late endosome membrane. Component of the ESCRT-I complex, a regulator of vesicular trafficking process. Required for the sorting of endocytic ubiquitinated cargos into multivesicular bodies. May be involved in cell growth and differentiation. In Mus musculus (Mouse), this protein is Vacuolar protein sorting-associated protein 37C (Vps37c).